Here is a 55-residue protein sequence, read N- to C-terminus: Large ribosomal subunit protein bL33A (55 aa).

The protein belongs to the bacterial ribosomal protein bL33 family.

The sequence is that of Large ribosomal subunit protein bL33A from Mycobacterium sp. (strain JLS).